Here is an 883-residue protein sequence, read N- to C-terminus: Bifunctional heparan sulfate N-deacetylase/N-sulfotransferase 2 (883 aa).

The Cytoplasmic portion of the chain corresponds to 1 to 18 (MLQLWKVVRPARQLELHR). Residues 19-39 (LILLLIGFSLVSMGFLAYYVS) form a helical; Signal-anchor for type II membrane protein membrane-spanning segment. Residues 40–883 (TSPKAKEPLP…REELQHSSVG (844 aa)) lie on the Lumenal side of the membrane. The segment at 41-597 (SPKAKEPLPL…KRHKDIWSKE (557 aa)) is heparan sulfate N-deacetylase 2. The interval 49-82 (PLPLGDCSSSGAAGPGPARPPVPPRPQRPPETTR) is disordered. A compositionally biased stretch (pro residues) spans 65-77 (PARPPVPPRPQRP). 3 N-linked (GlcNAc...) asparagine glycosylation sites follow: N233, N350, and N400. Positions 598–883 (KTCDRLPKFL…REELQHSSVG (286 aa)) are heparan sulfate N-sulfotransferase 2. Residue K613 is the For sulfotransferase activity of the active site. 613 to 617 (KTGTT) serves as a coordination point for 3'-phosphoadenylyl sulfate. An N-linked (GlcNAc...) asparagine glycan is attached at N666. Residue S711 participates in 3'-phosphoadenylyl sulfate binding. N-linked (GlcNAc...) asparagine glycans are attached at residues N726 and N802. Cysteines 817 and 827 form a disulfide. Residue 832–836 (KGRRY) participates in 3'-phosphoadenylyl sulfate binding.

The protein belongs to the sulfotransferase 1 family. NDST subfamily. In terms of assembly, monomer. Widely expressed in adult and throughout development.

It is found in the golgi apparatus membrane. The catalysed reaction is alpha-D-glucosaminyl-[heparan sulfate](n) + 3'-phosphoadenylyl sulfate = N-sulfo-alpha-D-glucosaminyl-[heparan sulfate](n) + adenosine 3',5'-bisphosphate + 2 H(+). It participates in glycan metabolism; heparan sulfate biosynthesis. The protein operates within glycan metabolism; heparin biosynthesis. Essential bifunctional enzyme that catalyzes both the N-deacetylation and the N-sulfation of glucosamine (GlcNAc) of the glycosaminoglycan in heparan sulfate. Modifies the GlcNAc-GlcA disaccharide repeating sugar backbone to make N-sulfated heparosan, a prerequisite substrate for later modifications in heparin biosynthesis. Plays a role in determining the extent and pattern of sulfation of heparan sulfate. Required for the exosomal release of SDCBP, CD63 and syndecan. The protein is Bifunctional heparan sulfate N-deacetylase/N-sulfotransferase 2 (Ndst2) of Mus musculus (Mouse).